A 309-amino-acid chain; its full sequence is MSNWLDKIMPSKIRSESRQRTGVPEGLWKKCPKCGAFLYKPELEKNLDVCPKCNHHLRVSARRRLDIFLDKDGREELAAHLEPSDRLKFKDSKRYKDRLAAAQKSTGEKDALIAMRGTTMGVPLVACAFEFNFLGGSMGQVVGEKFVQAANVALEHRIPLVCFSASGGARMQEAILSLMQMAKTAAVLEKLKQEGIPYISVMTDPVFGGVSASLAMLGDLNIAEPYALIGFAGPRVIEQTVREKLPEGFQRSEFLLEHGAIDMILHRHQMRERIAHLLAKFTAQEKPGTEAPIEFEVTEKPDVDEPEGQ.

The CoA carboxyltransferase N-terminal domain occupies 27 to 296; sequence LWKKCPKCGA…PGTEAPIEFE (270 aa). Zn(2+) is bound by residues cysteine 31, cysteine 34, cysteine 50, and cysteine 53. A C4-type zinc finger spans residues 31 to 53; that stretch reads CPKCGAFLYKPELEKNLDVCPKC. The segment at 288–309 is disordered; sequence GTEAPIEFEVTEKPDVDEPEGQ.

It belongs to the AccD/PCCB family. Acetyl-CoA carboxylase is a heterohexamer composed of biotin carboxyl carrier protein (AccB), biotin carboxylase (AccC) and two subunits each of ACCase subunit alpha (AccA) and ACCase subunit beta (AccD). Zn(2+) serves as cofactor.

The protein resides in the cytoplasm. It carries out the reaction N(6)-carboxybiotinyl-L-lysyl-[protein] + acetyl-CoA = N(6)-biotinyl-L-lysyl-[protein] + malonyl-CoA. It functions in the pathway lipid metabolism; malonyl-CoA biosynthesis; malonyl-CoA from acetyl-CoA: step 1/1. Component of the acetyl coenzyme A carboxylase (ACC) complex. Biotin carboxylase (BC) catalyzes the carboxylation of biotin on its carrier protein (BCCP) and then the CO(2) group is transferred by the transcarboxylase to acetyl-CoA to form malonyl-CoA. The chain is Acetyl-coenzyme A carboxylase carboxyl transferase subunit beta from Marinobacter nauticus (strain ATCC 700491 / DSM 11845 / VT8) (Marinobacter aquaeolei).